A 397-amino-acid chain; its full sequence is Mannonate dehydratase (397 aa).

It belongs to the mannonate dehydratase family. Requires Fe(2+) as cofactor. Mn(2+) serves as cofactor.

It catalyses the reaction D-mannonate = 2-dehydro-3-deoxy-D-gluconate + H2O. It functions in the pathway carbohydrate metabolism; pentose and glucuronate interconversion. Its function is as follows. Catalyzes the dehydration of D-mannonate. The sequence is that of Mannonate dehydratase from Saccharophagus degradans (strain 2-40 / ATCC 43961 / DSM 17024).